A 645-amino-acid chain; its full sequence is DNA ligase (645 aa).

NAD(+) is bound by residues 30–34 (DAEFD) and 72–73 (SQ). K99 (N6-AMP-lysine intermediate) is an active-site residue. Residues R120, E163, K275, and K296 each contribute to the NAD(+) site. Positions 387, 390, 403, and 408 each coordinate Zn(2+). Residues 564–645 (EEGAVLKGLS…EAFLNLIGKV (82 aa)) form the BRCT domain.

The protein belongs to the NAD-dependent DNA ligase family. LigA subfamily. Requires Mg(2+) as cofactor. It depends on Mn(2+) as a cofactor.

The catalysed reaction is NAD(+) + (deoxyribonucleotide)n-3'-hydroxyl + 5'-phospho-(deoxyribonucleotide)m = (deoxyribonucleotide)n+m + AMP + beta-nicotinamide D-nucleotide.. In terms of biological role, DNA ligase that catalyzes the formation of phosphodiester linkages between 5'-phosphoryl and 3'-hydroxyl groups in double-stranded DNA using NAD as a coenzyme and as the energy source for the reaction. It is essential for DNA replication and repair of damaged DNA. This chain is DNA ligase, found in Treponema denticola (strain ATCC 35405 / DSM 14222 / CIP 103919 / JCM 8153 / KCTC 15104).